The following is a 115-amino-acid chain: Somatostatin-1 (115 aa).

The N-terminal stretch at 1 to 24 (MLSCRFQCALVLLSLAVVFSKVSA) is a signal peptide. A propeptide spanning residues 25–88 (APSDLRLRQL…QDEVRLELDR (64 aa)) is cleaved from the precursor. The disordered stretch occupies residues 65-95 (NDALDSSDLSRGADQDEVRLELDRSANSSPL). A compositionally biased stretch (basic and acidic residues) spans 75 to 88 (RGADQDEVRLELDR). Residues Cys-104 and Cys-115 are joined by a disulfide bond.

It belongs to the somatostatin family.

The protein localises to the secreted. Functionally, somatostatin inhibits the release of somatotropin. The chain is Somatostatin-1 (sst1) from Protopterus annectens (African lungfish).